A 55-amino-acid polypeptide reads, in one-letter code: Large ribosomal subunit protein bL33 (55 aa).

It belongs to the bacterial ribosomal protein bL33 family.

The chain is Large ribosomal subunit protein bL33 from Beijerinckia indica subsp. indica (strain ATCC 9039 / DSM 1715 / NCIMB 8712).